A 780-amino-acid polypeptide reads, in one-letter code: Kazrin (780 aa).

The stretch at 79-261 (AQVLLREEVV…LATLTKDVPK (183 aa)) forms a coiled coil. The interval 295–430 (QQTLYHSHPP…TRHSLSLSEG (136 aa)) is disordered. A phosphoserine mark is found at serine 357, serine 372, and serine 392. The span at 416-427 (SQCSPTRHSLSL) shows a compositional bias: polar residues. SAM domains follow at residues 451–516 (WKAG…YRDA), 529–593 (DHHW…LYQV), and 617–684 (WTNQ…STVF). The tract at residues 692-780 (IRESERFGTP…EYSSLEVTNV (89 aa)) is disordered. Residues 760-771 (LQGRPEQCRLEE) show a composition bias toward basic and acidic residues.

Belongs to the kazrin family.

The protein resides in the cell junction. It is found in the nucleus. The protein localises to the cytoplasm. It localises to the cytoskeleton. Functionally, component of the cornified envelope of keratinocytes. May be involved in the interplay between adherens junctions and desmosomes. The function in the nucleus is not known. The sequence is that of Kazrin (Kazn) from Rattus norvegicus (Rat).